A 224-amino-acid polypeptide reads, in one-letter code: Thymidine kinase, cytosolic (224 aa).

S13 carries the post-translational modification Phosphoserine. ATP-binding positions include 26 to 33 (GPMFSGKS), 58 to 60 (DTR), and 98 to 101 (DEGQ). E99 acts as the Proton acceptor in catalysis. F129 is a substrate binding site. The Zn(2+) site is built by C154 and C157. Substrate contacts are provided by residues 173 to 177 (VEVIG) and Y182. Zn(2+) is bound by residues C186 and C189. Residues 203–205 (KEN) carry the KEN box motif.

This sequence belongs to the thymidine kinase family. Homotetramer. Tetramerization from dimerization is induced by ATP and increases catalytic efficiency due to a high affinity for thymidine. Tetramerization is inhibited by phosphorylation at Ser-13. Interacts (via the KEN box) with FZR1. Phosphorylated on Ser-13 in mitosis. Phosphorylation of Ser-13 by CDK1 during mitosis reduces homotetramerization and catalytic efficiency when DNA replication is complete and intracellular TK1 is still present at a high level. Post-translationally, polyubiquitinated. Postmitosis, ubiquitination leads to proteasomal degradation. The KEN box sequence located at the C-terminal region targets for degradation by the anaphase promoting complex (APC/C) activated and rate-limited by FZR1.

Its subcellular location is the cytoplasm. It carries out the reaction thymidine + ATP = dTMP + ADP + H(+). Its function is as follows. Cell-cycle-regulated enzyme of importance in nucleotide metabolism. Catalyzes the first enzymatic step in the salvage pathway converting thymidine into thymidine monophosphate. Transcriptional regulation limits expression to the S phase of the cell cycle and transient expression coincides with the oscillation in the intracellular dTTP concentration. The sequence is that of Thymidine kinase, cytosolic (TK1) from Gallus gallus (Chicken).